A 177-amino-acid polypeptide reads, in one-letter code: Large ribosomal subunit protein uL6 (177 aa).

Residues 157-177 form a disordered region; sequence YKGKGVRYAGEKVRRKEGKKK.

The protein belongs to the universal ribosomal protein uL6 family. Part of the 50S ribosomal subunit.

In terms of biological role, this protein binds to the 23S rRNA, and is important in its secondary structure. It is located near the subunit interface in the base of the L7/L12 stalk, and near the tRNA binding site of the peptidyltransferase center. This Caulobacter vibrioides (strain ATCC 19089 / CIP 103742 / CB 15) (Caulobacter crescentus) protein is Large ribosomal subunit protein uL6.